The primary structure comprises 502 residues: Protein DETOXIFICATION 49 (502 aa).

The next 12 helical transmembrane spans lie at 41 to 61, 75 to 95, 123 to 143, 153 to 173, 190 to 210, 216 to 236, 267 to 287, 293 to 313, 338 to 358, 372 to 392, 414 to 434, and 439 to 459; these read LPLI…MLFL, LALG…SIGM, LLCS…LLFF, AEIF…LHPI, AFFA…SLGL, ALGA…YIVF, VSVC…GLLL, VASM…PSSL, RTGL…ALMV, IVKL…GNCP, LCCF…FSGF, and LWLG…VVLA.

This sequence belongs to the multi antimicrobial extrusion (MATE) (TC 2.A.66.1) family.

The protein resides in the membrane. The protein is Protein DETOXIFICATION 49 of Arabidopsis thaliana (Mouse-ear cress).